The following is a 508-amino-acid chain: Photosystem II CP47 reaction center protein (508 aa).

6 helical membrane passes run 21-36 (AVHIMHTALVSGWAGS), 101-115 (IVFSGLCFLAAIWHW), 140-156 (GIHLFLAGVACFGFGAF), 203-218 (IAAGTLGILAGLFHLS), 237-252 (VLSSSIAAVFFAAFVV), and 457-472 (TFALLFFFGHIWHGAR).

This sequence belongs to the PsbB/PsbC family. PsbB subfamily. In terms of assembly, PSII is composed of 1 copy each of membrane proteins PsbA, PsbB, PsbC, PsbD, PsbE, PsbF, PsbH, PsbI, PsbJ, PsbK, PsbL, PsbM, PsbT, PsbX, PsbY, PsbZ, Psb30/Ycf12, at least 3 peripheral proteins of the oxygen-evolving complex and a large number of cofactors. It forms dimeric complexes. It depends on Binds multiple chlorophylls. PSII binds additional chlorophylls, carotenoids and specific lipids. as a cofactor.

Its subcellular location is the plastid. It localises to the chloroplast thylakoid membrane. Its function is as follows. One of the components of the core complex of photosystem II (PSII). It binds chlorophyll and helps catalyze the primary light-induced photochemical processes of PSII. PSII is a light-driven water:plastoquinone oxidoreductase, using light energy to abstract electrons from H(2)O, generating O(2) and a proton gradient subsequently used for ATP formation. The sequence is that of Photosystem II CP47 reaction center protein from Lolium perenne (Perennial ryegrass).